We begin with the raw amino-acid sequence, 252 residues long: 5-oxoprolinase subunit A (252 aa).

Belongs to the LamB/PxpA family. Forms a complex composed of PxpA, PxpB and PxpC.

The enzyme catalyses 5-oxo-L-proline + ATP + 2 H2O = L-glutamate + ADP + phosphate + H(+). In terms of biological role, catalyzes the cleavage of 5-oxoproline to form L-glutamate coupled to the hydrolysis of ATP to ADP and inorganic phosphate. The protein is 5-oxoprolinase subunit A of Mycobacterium leprae (strain Br4923).